The chain runs to 363 residues: Small ribosomal subunit biogenesis GTPase RsgA (363 aa).

Positions 112–268 constitute a CP-type G domain; the sequence is HQQVIAANID…LIDTPGMREL (157 aa). GTP-binding positions include 157 to 160 and 210 to 218; these read TKAD and GSSGAGKST. Zn(2+) contacts are provided by Cys291, Cys296, His298, and Cys304. The disordered stretch occupies residues 340–363; the sequence is RVAQNNRGKGSGKRPASVDRPGRH.

The protein belongs to the TRAFAC class YlqF/YawG GTPase family. RsgA subfamily. As to quaternary structure, monomer. Associates with 30S ribosomal subunit, binds 16S rRNA. The cofactor is Zn(2+).

Its subcellular location is the cytoplasm. Its function is as follows. One of several proteins that assist in the late maturation steps of the functional core of the 30S ribosomal subunit. Helps release RbfA from mature subunits. May play a role in the assembly of ribosomal proteins into the subunit. Circularly permuted GTPase that catalyzes slow GTP hydrolysis, GTPase activity is stimulated by the 30S ribosomal subunit. The protein is Small ribosomal subunit biogenesis GTPase RsgA of Xanthomonas axonopodis pv. citri (strain 306).